A 660-amino-acid chain; its full sequence is Protein FAM161A (660 aa).

2 coiled-coil regions span residues 93–120 (EEYF…YQDK) and 296–320 (YHDL…ALLA). A required for interaction with CFAP418 region spans residues 341-525 (QLRDFLKYKK…PTVSSRGREQ (185 aa)). Residues Lys-468 and Lys-484 each participate in a glycyl lysine isopeptide (Lys-Gly) (interchain with G-Cter in SUMO2) cross-link. A coiled-coil region spans residues 522–552 (GREQAVRKSEKERMREYQRELEEREEKLKKR). Positions 605–660 (KSVTEDKESFNEEEKIEERENGEENYFIDTNSQDSYKEKDEANEESEEEKSVEESH) are disordered. The segment covering 606–623 (SVTEDKESFNEEEKIEER) has biased composition (basic and acidic residues). The segment covering 645–660 (EANEESEEEKSVEESH) has biased composition (acidic residues).

It belongs to the FAM161 family. Interacts (via central region) with CFAP418 (via N-terminus); the interaction is direct. Interacts (via C-terminus) with microtubules. Interacts with LCA5. Interacts with CEP290. Interacts with SDCCAG8. Interacts with FAM161B. Interacts with POC1B. Interacts with CEP78. Forms a microtubule-associated complex with POC5, CETN2 and POC1B. Interacts with CCDC15. Isoform 1 and isoform 3 are widely expressed with highest levels in retina and testis, with isoform 1 being the most abundant in all tissues tested.

The protein resides in the cytoplasm. The protein localises to the cytoskeleton. It is found in the cilium basal body. It localises to the cell projection. Its subcellular location is the cilium. The protein resides in the microtubule organizing center. The protein localises to the centrosome. It is found in the centriole. Involved in ciliogenesis. In Homo sapiens (Human), this protein is Protein FAM161A (FAM161A).